The primary structure comprises 225 residues: Protein GrpE (225 aa).

2 disordered regions span residues 1–44 and 183–225; these read MTEE…ENAG and VAVA…PDEG.

It belongs to the GrpE family. Homodimer.

It localises to the cytoplasm. Functionally, participates actively in the response to hyperosmotic and heat shock by preventing the aggregation of stress-denatured proteins, in association with DnaK and GrpE. It is the nucleotide exchange factor for DnaK and may function as a thermosensor. Unfolded proteins bind initially to DnaJ; upon interaction with the DnaJ-bound protein, DnaK hydrolyzes its bound ATP, resulting in the formation of a stable complex. GrpE releases ADP from DnaK; ATP binding to DnaK triggers the release of the substrate protein, thus completing the reaction cycle. Several rounds of ATP-dependent interactions between DnaJ, DnaK and GrpE are required for fully efficient folding. This Streptomyces coelicolor (strain ATCC BAA-471 / A3(2) / M145) protein is Protein GrpE.